A 417-amino-acid chain; its full sequence is Tyrosine--tRNA ligase (417 aa).

Position 39 (Tyr-39) interacts with L-tyrosine. The short motif at 44 to 53 (CTAPSLHVGH) is the 'HIGH' region element. L-tyrosine contacts are provided by Tyr-176 and Gln-180. A 'KMSKS' region motif is present at residues 236-240 (KMGKT). Lys-239 provides a ligand contact to ATP. The S4 RNA-binding domain occupies 350 to 417 (AGVLALFVKA…KKRHVLLRPA (68 aa)).

The protein belongs to the class-I aminoacyl-tRNA synthetase family. TyrS type 1 subfamily. In terms of assembly, homodimer.

Its subcellular location is the cytoplasm. It catalyses the reaction tRNA(Tyr) + L-tyrosine + ATP = L-tyrosyl-tRNA(Tyr) + AMP + diphosphate + H(+). In terms of biological role, catalyzes the attachment of tyrosine to tRNA(Tyr) in a two-step reaction: tyrosine is first activated by ATP to form Tyr-AMP and then transferred to the acceptor end of tRNA(Tyr). The sequence is that of Tyrosine--tRNA ligase from Nitrobacter winogradskyi (strain ATCC 25391 / DSM 10237 / CIP 104748 / NCIMB 11846 / Nb-255).